Consider the following 64-residue polypeptide: Large ribosomal subunit protein bL33 (64 aa).

The protein belongs to the bacterial ribosomal protein bL33 family.

The chain is Large ribosomal subunit protein bL33 from Picosynechococcus sp. (strain ATCC 27264 / PCC 7002 / PR-6) (Agmenellum quadruplicatum).